The sequence spans 493 residues: Leucine-rich repeat-containing protein 14 (493 aa).

An LRR 1; degenerate repeat occupies 111–146 (KHTLRVLDMTGLLDDGVEQDPGTMSMWDCTAAVART). Residues 194-218 (RLCCRDLRAEDLPMRNTVALLQLLD) form an LRR 2; degenerate repeat. The LRR 3; degenerate repeat unit spans residues 219–246 (AGCLRRVDLRFNNLGLRGLSVIIPHVAR). One copy of the LRR 4; degenerate repeat lies at 247–282 (FQHLASLRLHYVHGDSRQPSVDGEDNFRYFLAQMGR). LRR repeat units follow at residues 283–307 (FTCL…LSTL), 308–339 (QSPL…VHLK), 340–360 (KLDL…QGLL), 364–391 (AATL…VLTR), and 392–416 (CASL…LLRD).

Belongs to the PRAME family. LRRC14 subfamily. As to quaternary structure, interacts with IKBKB; disrupts IKBKB-IKBKG interaction preventing I-kappa-B-kinase (IKK) core complex formation and leading to a decrease of IKBKB phosphorylation and NF-kappaB activation. Interacts with CHUK.

It localises to the cytoplasm. In terms of biological role, negatively regulates Toll-like receptor-mediated NF-kappa-B signaling by disrupting IKK core complex formation through interaction with IKBKB. The protein is Leucine-rich repeat-containing protein 14 of Bos taurus (Bovine).